Here is a 364-residue protein sequence, read N- to C-terminus: Peptide chain release factor 2 (364 aa).

Q251 bears the N5-methylglutamine mark.

The protein belongs to the prokaryotic/mitochondrial release factor family. Post-translationally, methylated by PrmC. Methylation increases the termination efficiency of RF2.

It localises to the cytoplasm. Peptide chain release factor 2 directs the termination of translation in response to the peptide chain termination codons UGA and UAA. This Buchnera aphidicola subsp. Schizaphis graminum (strain Sg) protein is Peptide chain release factor 2 (prfB).